The primary structure comprises 133 residues: ATP synthase epsilon chain (133 aa).

This sequence belongs to the ATPase epsilon chain family. In terms of assembly, F-type ATPases have 2 components, CF(1) - the catalytic core - and CF(0) - the membrane proton channel. CF(1) has five subunits: alpha(3), beta(3), gamma(1), delta(1), epsilon(1). CF(0) has three main subunits: a, b and c.

It localises to the cell membrane. Produces ATP from ADP in the presence of a proton gradient across the membrane. The protein is ATP synthase epsilon chain of Bacillus mycoides (strain KBAB4) (Bacillus weihenstephanensis).